A 396-amino-acid chain; its full sequence is Protein PIN-LIKES 5 (396 aa).

Topologically, residues M1–S5 are lumenal. The chain crosses the membrane as a helical span at residues L6–F26. Residues M27–K45 are Cytoplasmic-facing. Residues V46–L66 form a helical membrane-spanning segment. Over E67–W73 the chain is Lumenal. The chain crosses the membrane as a helical span at residues F74 to V94. At K95–L106 the chain is on the cytoplasmic side. Residues I107–I127 traverse the membrane as a helical segment. Topologically, residues C128 to V144 are lumenal. The helical transmembrane segment at G145 to F165 threads the bilayer. The Cytoplasmic segment spans residues R166–E229. The helical transmembrane segment at I230–A250 threads the bilayer. The Lumenal portion of the chain corresponds to V251–K273. A helical membrane pass occupies residues L274–G294. Residues L295 to R312 are Cytoplasmic-facing. Residues Y313 to L333 traverse the membrane as a helical segment. The Lumenal segment spans residues P334–P337. Residues L338–M358 form a helical membrane-spanning segment. At T359–S370 the chain is on the cytoplasmic side. A helical transmembrane segment spans residues V371–F391. The Lumenal segment spans residues L392–V396.

It belongs to the auxin efflux carrier (TC 2.A.69.2) family. In terms of tissue distribution, expressed in seedlings, cauline leaves and flowers.

The protein resides in the endoplasmic reticulum membrane. Involved in cellular auxin homeostasis by regulating auxin metabolism. Regulates intracellular auxin accumulation at the endoplasmic reticulum and thus auxin availability for nuclear auxin signaling. This is Protein PIN-LIKES 5 from Arabidopsis thaliana (Mouse-ear cress).